We begin with the raw amino-acid sequence, 692 residues long: Elongation factor G (692 aa).

In terms of domain architecture, tr-type G spans glutamate 8–leucine 282. GTP contacts are provided by residues alanine 17 to threonine 24, aspartate 81 to histidine 85, and asparagine 135 to aspartate 138.

It belongs to the TRAFAC class translation factor GTPase superfamily. Classic translation factor GTPase family. EF-G/EF-2 subfamily.

It localises to the cytoplasm. Catalyzes the GTP-dependent ribosomal translocation step during translation elongation. During this step, the ribosome changes from the pre-translocational (PRE) to the post-translocational (POST) state as the newly formed A-site-bound peptidyl-tRNA and P-site-bound deacylated tRNA move to the P and E sites, respectively. Catalyzes the coordinated movement of the two tRNA molecules, the mRNA and conformational changes in the ribosome. The polypeptide is Elongation factor G (Bacillus anthracis (strain CDC 684 / NRRL 3495)).